The sequence spans 250 residues: 2,3-bisphosphoglycerate-dependent phosphoglycerate mutase (250 aa).

Substrate-binding positions include 10 to 17, 23 to 24, Arg62, 89 to 92, Lys100, 116 to 117, and 185 to 186; these read RHGESQWN, TG, ERHY, RR, and GN. His11 acts as the Tele-phosphohistidine intermediate in catalysis. Residue Glu89 is the Proton donor/acceptor of the active site.

The protein belongs to the phosphoglycerate mutase family. BPG-dependent PGAM subfamily. Homodimer.

It carries out the reaction (2R)-2-phosphoglycerate = (2R)-3-phosphoglycerate. The protein operates within carbohydrate degradation; glycolysis; pyruvate from D-glyceraldehyde 3-phosphate: step 3/5. In terms of biological role, catalyzes the interconversion of 2-phosphoglycerate and 3-phosphoglycerate. The sequence is that of 2,3-bisphosphoglycerate-dependent phosphoglycerate mutase from Cronobacter sakazakii (strain ATCC BAA-894) (Enterobacter sakazakii).